We begin with the raw amino-acid sequence, 238 residues long: Monocyte to macrophage differentiation factor (238 aa).

The Cytoplasmic segment spans residues 1–28 (MRFKNRFQRFMNHRAPANGRYKPTCYEH). The helical transmembrane segment at 29-49 (AANCYTHAFLIVPAIVGSALL) threads the bilayer. At 50–61 (HRLSDDCWEKIT) the chain is on the lumenal side. A helical transmembrane segment spans residues 62–82 (AWIYGMGLCALFIVSTVFHIV). At 83–101 (SWKKSHLRTVEHCFHMCDR) the chain is on the cytoplasmic side. Residues 102-122 (MVIYFFIAASYAPWLNLRELG) traverse the membrane as a helical segment. Topologically, residues 123–124 (PL) are lumenal. A helical membrane pass occupies residues 125-145 (ASHMRWFIWLMAAGGTIYVFL). Over 146-151 (YHEKYK) the chain is Cytoplasmic. A helical membrane pass occupies residues 152 to 172 (VVELFFYLTMGFSPALVVTSM). At 173-174 (NN) the chain is on the lumenal side. A helical transmembrane segment spans residues 175–195 (TDGLQELACGGLIYCLGVVFF). The Cytoplasmic segment spans residues 196-198 (KSD). A helical membrane pass occupies residues 199-219 (GIIPFAHAIWHLFVATAAAVH). The Lumenal portion of the chain corresponds to 220 to 238 (YYAIWKYLYRSPTDFMRHL).

Belongs to the ADIPOR family. As to expression, exhibits relatively ubiquitous expression with preferential expression in mature (in vitro differentiated) macrophages.

Its subcellular location is the late endosome membrane. The protein localises to the lysosome membrane. Functionally, involved in the dynamics of lysosomal membranes associated with microglial activation following brain lesion. This chain is Monocyte to macrophage differentiation factor, found in Homo sapiens (Human).